The sequence spans 602 residues: PEX5-related protein (602 aa).

Disordered stretches follow at residues 94–140 (VSQT…PETS) and 167–206 (HLMAERKSCSSRAGSKELLWSSEHRSQPELSTGKSALNSE). A phosphoserine mark is found at S181, S229, S233, and S237. 3 TPR repeats span residues 302–335 (WPGAFEEGLKRLKEGDLPVTILFMEAAILQDPGN), 336–369 (AEAWQFLGITQAENENEQAAIVALQRCLELQPNN), and 371–403 (KALMALAVSYTNTSHQQDACEALKNWIKQNPKY). A phosphoserine mark is found at S421 and S423. TPR repeat units lie at residues 450 to 483 (PDLQTGLGVLFHLSGEFNRAIDAFNAALTVRPED), 485 to 517 (SLWNRLGATLANGDRSEEAVEAYTRALEIQPGF), and 519 to 551 (RSRYNLGISCINLGAYREAVSNFLTALSLQRKS).

This sequence belongs to the peroxisomal targeting signal receptor family. In terms of assembly, forms an obligate 4:4 complex with HCN2. Interacts with RAB8B. Interacts with HCN3. Interacts with HCN4 with a 4:4 HCN4:PEX5L stoichiometry; reduces the effects of cAMP on the voltage-dependence and rate of activation of HCN4. In terms of tissue distribution, brain specific.

It localises to the cytoplasm. The protein resides in the membrane. Functionally, accessory subunit of hyperpolarization-activated cyclic nucleotide-gated (HCN) channels, regulating their cell-surface expression and cyclic nucleotide dependence. The protein is PEX5-related protein (Pex5l) of Rattus norvegicus (Rat).